A 184-amino-acid chain; its full sequence is MISVTDLRPGTKVKMDGGLWECVEYQHQKLGRGGAKVVAKFKNLETGATVERTFNSGEKLEDIYVETRELQYLYPEGEEMVFMDLETYEQFAVPRSRVVGAEFFKEGMTALGDMYEGQPIKVTPPTVVELKVVDTPPGVRGDTVSGGSKPATLETGAVVQVPLFVEPGEVIKVDTRTGEYVGRA.

Belongs to the elongation factor P family.

The protein resides in the cytoplasm. Its pathway is protein biosynthesis; polypeptide chain elongation. Its function is as follows. Involved in peptide bond synthesis. Stimulates efficient translation and peptide-bond synthesis on native or reconstituted 70S ribosomes in vitro. Probably functions indirectly by altering the affinity of the ribosome for aminoacyl-tRNA, thus increasing their reactivity as acceptors for peptidyl transferase. This is Elongation factor P from Thermus thermophilus (strain ATCC BAA-163 / DSM 7039 / HB27).